The following is a 297-amino-acid chain: Formylmethanofuran--tetrahydromethanopterin formyltransferase (297 aa).

The protein belongs to the FTR family. Homotetramer.

The protein localises to the cytoplasm. It catalyses the reaction N-formylmethanofuran + 5,6,7,8-tetrahydromethanopterin + H(+) = N(5)-formyl-5,6,7,8-tetrahydromethanopterin + methanofuran. It functions in the pathway one-carbon metabolism; methanogenesis from CO(2); 5,10-methenyl-5,6,7,8-tetrahydromethanopterin from CO(2): step 2/3. Functionally, catalyzes the reversible transfer of a formyl group from formylmethanofuran (formyl-MFR) to tetrahydromethanopterin (H(4)MPT) to produce 5-formyl tetrahydromethanopterin (5-formyl-H(4)MPT) and methanofuran (MFR). The chain is Formylmethanofuran--tetrahydromethanopterin formyltransferase from Methanococcoides burtonii (strain DSM 6242 / NBRC 107633 / OCM 468 / ACE-M).